The chain runs to 315 residues: Lipoyl synthase (315 aa).

Residues C62, C67, C73, C88, C92, C95, and S302 each contribute to the [4Fe-4S] cluster site. The Radical SAM core domain maps to 74 to 291; that stretch reads FGKGTATFMI…ETEALRMGFR (218 aa).

Belongs to the radical SAM superfamily. Lipoyl synthase family. Requires [4Fe-4S] cluster as cofactor.

The protein resides in the cytoplasm. The enzyme catalyses [[Fe-S] cluster scaffold protein carrying a second [4Fe-4S](2+) cluster] + N(6)-octanoyl-L-lysyl-[protein] + 2 oxidized [2Fe-2S]-[ferredoxin] + 2 S-adenosyl-L-methionine + 4 H(+) = [[Fe-S] cluster scaffold protein] + N(6)-[(R)-dihydrolipoyl]-L-lysyl-[protein] + 4 Fe(3+) + 2 hydrogen sulfide + 2 5'-deoxyadenosine + 2 L-methionine + 2 reduced [2Fe-2S]-[ferredoxin]. It participates in protein modification; protein lipoylation via endogenous pathway; protein N(6)-(lipoyl)lysine from octanoyl-[acyl-carrier-protein]: step 2/2. Its function is as follows. Catalyzes the radical-mediated insertion of two sulfur atoms into the C-6 and C-8 positions of the octanoyl moiety bound to the lipoyl domains of lipoate-dependent enzymes, thereby converting the octanoylated domains into lipoylated derivatives. In Azoarcus sp. (strain BH72), this protein is Lipoyl synthase.